Here is a 1359-residue protein sequence, read N- to C-terminus: Nuclear protein STH1/NPS1 (1359 aa).

S38 carries the phosphoserine modification. The 77-residue stretch at 307-383 (LERQQLLEKR…AKQRLAALKS (77 aa)) folds into the HSA domain. A Helicase ATP-binding domain is found at 482–647 (VSLYNNHLNG…WALLNFVLPK (166 aa)). 495 to 502 (DEMGLGKT) serves as a coordination point for ATP. The DEGH box signature appears at 597 to 600 (DEGH). The 162-residue stretch at 795 to 956 (LLDRVLPKFK…NKSTAEEQEA (162 aa)) folds into the Helicase C-terminal domain. The interval 1090–1246 (RERRRLRQNG…TAAKKTKTKS (157 aa)) is disordered. A compositionally biased stretch (polar residues) spans 1108 to 1126 (LENTPEASETSLIENNSFT). Composition is skewed to basic residues over residues 1143–1154 (RSKRRSSRKKRT) and 1198–1210 (KKKK…KIKL). The span at 1219–1232 (NDGKRAEEKPESKS) shows a compositional bias: basic and acidic residues. The segment covering 1233 to 1246 (PAKKTAAKKTKTKS) has biased composition (basic residues). The Bromo domain occupies 1257–1357 (KLVEEMREQL…EFTDEWFKEH (101 aa)).

It belongs to the SNF2/RAD54 helicase family. In terms of assembly, interacts directly with SFH1, CSE4, histones H3, H4 and H2B, and via its N-terminus, with RSC8. Interacts with LDB7, NPL6 and RTT102. Component of the two forms of the RSC complex composed of at least either RSC1 or RSC2, and ARP7, ARP9, LDB7, NPL6, RSC3, RSC30, RSC4, RSC58, RSC6, RSC8, RSC9, SFH1, STH1, HTL1 and probably RTT102. The complexes interact with histone and histone variant components of centromeric chromatin.

It is found in the nucleus. It catalyses the reaction ATP + H2O = ADP + phosphate + H(+). Catalytic component of the chromatin structure-remodeling complex (RSC), which is involved in transcription regulation and nucleosome positioning. RSC is responsible for the transfer of a histone octamer from a nucleosome core particle to naked DNA. The reaction requires ATP and involves an activated RSC-nucleosome intermediate. Remodeling reaction also involves DNA translocation, DNA twist and conformational change. As a reconfigurer of centromeric and flanking nucleosomes, RSC complex is required both for proper kinetochore function in chromosome segregation and, via a PKC1-dependent signaling pathway, for organization of the cellular cytoskeleton. This subunit is the essential ATPase of the complex. It is a DNA translocase capable of nucleosome remodeling. Required for full expression of early meiotic genes. Essential for mitotic growth and repression of CHA1 expression. Also involved in G2 phase control. This is Nuclear protein STH1/NPS1 (STH1) from Saccharomyces cerevisiae (strain ATCC 204508 / S288c) (Baker's yeast).